The primary structure comprises 409 residues: Pentatricopeptide repeat-containing protein At1g31790 (409 aa).

PPR repeat units lie at residues 87–121, 122–152, 153–187, 192–226, 229–259, 260–294, 295–330, 331–361, and 363–397; these read NEDI…SIRP, TITF…MPHR, DFHS…SQKG, PSWI…GFID, DSYL…LSNA, NTVA…GIKK, NVSV…GFES, DCLI…SKDE, and SVSC…GIKA.

The protein belongs to the PPR family. PCMP-A subfamily.

This Arabidopsis thaliana (Mouse-ear cress) protein is Pentatricopeptide repeat-containing protein At1g31790 (PCMP-A1).